The following is an 802-amino-acid chain: Fibroblast growth factor receptor 4 (802 aa).

Positions 1–21 are cleaved as a signal peptide; it reads MRLLLALLGVLLSVPGPPVLS. Positions 22-118 constitute an Ig-like C2-type 1 domain; sequence LEASEEVELE…VLQNLTLITG (97 aa). Residues 22–369 lie on the Extracellular side of the membrane; that stretch reads LEASEEVELE…AAAPEARYTD (348 aa). A disulfide bridge connects residues C57 and C101. N-linked (GlcNAc...) asparagine glycosylation is present at N112. A disordered region spans residues 119–148; the sequence is DSLTSSNDDEDPKSHRDPSNRHSYPQQAPY. 2 Ig-like C2-type domains span residues 152–240 and 249–349; these read PQRM…YLLD and PILQ…AWLT. An intrachain disulfide couples C172 to C224. N-linked (GlcNAc...) asparagine glycosylation is found at N258, N290, N311, and N322. C271 and C333 are disulfide-bonded. The helical transmembrane segment at 370–390 threads the bilayer; sequence IILYASGSLALAVLLLLAGLY. Residue Y390 is modified to Phosphotyrosine; in variant R-388. The Cytoplasmic segment spans residues 391–802; the sequence is RGQALHGRHP…SFPFGSGVQT (412 aa). Positions 467–755 constitute a Protein kinase domain; that stretch reads LVLGKPLGEG…VLLAVSEEYL (289 aa). ATP contacts are provided by residues 473-481 and K503; that span reads LGEGCFGQV. S573 bears the Phosphoserine mark. D612 functions as the Proton acceptor in the catalytic mechanism. Y642, Y643, and Y754 each carry phosphotyrosine; by autocatalysis.

Belongs to the protein kinase superfamily. Tyr protein kinase family. Fibroblast growth factor receptor subfamily. As to quaternary structure, monomer. Homodimer after ligand binding. Interacts with FGF1, FGF2, FGF4, FGF6, FGF8, FGF9, FGF16, FGF17, FGF18, FGF19, FGF21 and FGF23 (in vitro). Binding affinity for FGF family members is enhanced by interactions between FGFs and heparan sulfate proteoglycans. Interacts with KLB; this strongly increases the affinity for FGF19 and FGF23. Affinity for FGF19 is strongly increased by KLB and sulfated glycosaminoglycans. KLB and KL both interact with the core-glycosylated FGFR4 in the endoplasmic reticulum and promote its degradation, so that only FGFR4 with fully mature N-glycans is expressed at the cell surface. Identified in a complex with NCAM1, CDH2, PLCG1, FRS2, SRC, SHC1, GAP43 and CTTN. Interacts with MMP14 and HIP1. Interacts with STAT3. In terms of processing, N-glycosylated. Full maturation of the glycan chains in the Golgi is essential for high affinity interaction with FGF19. Ubiquitinated. Subject to proteasomal degradation when not fully glycosylated. Post-translationally, autophosphorylated. Binding of FGF family members together with heparan sulfate proteoglycan or heparin promotes receptor dimerization and autophosphorylation on tyrosine residues. Autophosphorylation occurs in trans between the two FGFR molecules present in the dimer. As to expression, expressed in gastrointestinal epithelial cells, pancreas, and gastric and pancreatic cancer cell lines.

The protein localises to the cell membrane. The protein resides in the endosome. It localises to the endoplasmic reticulum. Its subcellular location is the secreted. It catalyses the reaction L-tyrosyl-[protein] + ATP = O-phospho-L-tyrosyl-[protein] + ADP + H(+). Present in an inactive conformation in the absence of bound ligand. Ligand binding leads to dimerization and activation by autophosphorylation on tyrosine residues. Tyrosine-protein kinase that acts as a cell-surface receptor for fibroblast growth factors and plays a role in the regulation of cell proliferation, differentiation and migration, and in regulation of lipid metabolism, bile acid biosynthesis, glucose uptake, vitamin D metabolism and phosphate homeostasis. Required for normal down-regulation of the expression of CYP7A1, the rate-limiting enzyme in bile acid synthesis, in response to FGF19. Phosphorylates PLCG1 and FRS2. Ligand binding leads to the activation of several signaling cascades. Activation of PLCG1 leads to the production of the cellular signaling molecules diacylglycerol and inositol 1,4,5-trisphosphate. Phosphorylation of FRS2 triggers recruitment of GRB2, GAB1, PIK3R1 and SOS1, and mediates activation of RAS, MAPK1/ERK2, MAPK3/ERK1 and the MAP kinase signaling pathway, as well as of the AKT1 signaling pathway. Promotes SRC-dependent phosphorylation of the matrix protease MMP14 and its lysosomal degradation. FGFR4 signaling is down-regulated by receptor internalization and degradation; MMP14 promotes internalization and degradation of FGFR4. Mutations that lead to constitutive kinase activation or impair normal FGFR4 inactivation lead to aberrant signaling. The chain is Fibroblast growth factor receptor 4 (FGFR4) from Homo sapiens (Human).